Consider the following 115-residue polypeptide: MKFVLLFGVLLVTLFSYSSAEMLDDFDQADEDELLSLIEKEEARAKECTPRFYDCSHDRHSCCRSELFKDVCTCFYPEGGDNEVCTCQQPKHLKYMEKAAGKAKKFGGKIRKWFG.

Positions 1-20 (MKFVLLFGVLLVTLFSYSSA) are cleaved as a signal peptide. Residues 21–44 (EMLDDFDQADEDELLSLIEKEEAR) constitute a propeptide that is removed on maturation. 4 cysteine pairs are disulfide-bonded: Cys48-Cys63, Cys55-Cys72, Cys62-Cys87, and Cys74-Cys85.

Belongs to the neurotoxin 19 (CSTX) family. 01 subfamily. As to expression, expressed by the venom gland.

It is found in the secreted. The protein is U3-lycotoxin-Ls1o of Lycosa singoriensis (Wolf spider).